The sequence spans 1791 residues: Protein TIC 214 (1791 aa).

A run of 6 helical transmembrane segments spans residues 19–39 (IINS…FSIG), 68–88 (FIAG…HLAL), 91–111 (PHTI…WNNH), 133–153 (VFLN…SSML), 176–196 (VGWL…LVWI), and 227–247 (IFSI…PSPI). A disordered region spans residues 1492–1511 (ASQVELESDKENKKNPESAL). The span at 1498 to 1511 (ESDKENKKNPESAL) shows a compositional bias: basic and acidic residues.

Belongs to the TIC214 family. As to quaternary structure, part of the Tic complex.

Its subcellular location is the plastid. The protein localises to the chloroplast inner membrane. Functionally, involved in protein precursor import into chloroplasts. May be part of an intermediate translocation complex acting as a protein-conducting channel at the inner envelope. This chain is Protein TIC 214, found in Barbarea verna (Land cress).